A 511-amino-acid polypeptide reads, in one-letter code: Trafficking protein particle complex subunit 13 homolog (511 aa).

This sequence belongs to the TRAPPC13 family.

This Dictyostelium discoideum (Social amoeba) protein is Trafficking protein particle complex subunit 13 homolog.